We begin with the raw amino-acid sequence, 153 residues long: 6,7-dimethyl-8-ribityllumazine synthase (153 aa).

Residues phenylalanine 22, 56–58 (AFE), and 80–82 (CVI) contribute to the 5-amino-6-(D-ribitylamino)uracil site. 85–86 (AT) contacts (2S)-2-hydroxy-3-oxobutyl phosphate. The active-site Proton donor is histidine 88. Phenylalanine 113 provides a ligand contact to 5-amino-6-(D-ribitylamino)uracil. Residue arginine 127 coordinates (2S)-2-hydroxy-3-oxobutyl phosphate.

Belongs to the DMRL synthase family.

It catalyses the reaction (2S)-2-hydroxy-3-oxobutyl phosphate + 5-amino-6-(D-ribitylamino)uracil = 6,7-dimethyl-8-(1-D-ribityl)lumazine + phosphate + 2 H2O + H(+). It participates in cofactor biosynthesis; riboflavin biosynthesis; riboflavin from 2-hydroxy-3-oxobutyl phosphate and 5-amino-6-(D-ribitylamino)uracil: step 1/2. In terms of biological role, catalyzes the formation of 6,7-dimethyl-8-ribityllumazine by condensation of 5-amino-6-(D-ribitylamino)uracil with 3,4-dihydroxy-2-butanone 4-phosphate. This is the penultimate step in the biosynthesis of riboflavin. This is 6,7-dimethyl-8-ribityllumazine synthase from Endomicrobium trichonymphae.